We begin with the raw amino-acid sequence, 319 residues long: Malate dehydrogenase (319 aa).

NAD(+)-binding positions include 10-15 (GAGNIG) and Asp-34. Substrate-binding residues include Arg-83 and Arg-89. NAD(+) contacts are provided by residues Asn-96 and 119-121 (ITN). 2 residues coordinate substrate: Asn-121 and Arg-152. His-176 acts as the Proton acceptor in catalysis.

Belongs to the LDH/MDH superfamily. MDH type 3 family.

It catalyses the reaction (S)-malate + NAD(+) = oxaloacetate + NADH + H(+). Functionally, catalyzes the reversible oxidation of malate to oxaloacetate. The protein is Malate dehydrogenase of Francisella tularensis subsp. mediasiatica (strain FSC147).